We begin with the raw amino-acid sequence, 296 residues long: MTKKQLHLVIVTGMSGAGKTVAIQSFEDLGCFTIDNMPPALLPKFLQLVEIKEDNPKLALVVDMRSRSFFSEIQAVLDELENQDGLDFKILFLDAADKELVARYKETRRSHPLAADGRILDGIKLERELLAPLKNMSQNVVDTTELTPRELRKTLAEQFSDQEQAQSFRIEVMSFGFKYGIPIDADLVFDVRFLPNPYYLPELRNQTGVDEPVYDYVMNHPESEDFYQHLLALIEPILPSYQKEGKSVLTIAMGCTGGQHRSVAFAKRLVQDLSKNWSVNEGHRDKDRRKETVNRS.

An ATP-binding site is contributed by 13–20 (GMSGAGKT). 63–66 (DMRS) serves as a coordination point for GTP.

The protein belongs to the RapZ-like family.

Functionally, displays ATPase and GTPase activities. The polypeptide is Nucleotide-binding protein SPJ_1472 (Streptococcus pneumoniae (strain JJA)).